The following is a 144-amino-acid chain: D-aminoacyl-tRNA deacylase (144 aa).

Positions 136-137 (GP) match the Gly-cisPro motif, important for rejection of L-amino acids motif.

It belongs to the DTD family. Homodimer.

The protein resides in the cytoplasm. The catalysed reaction is glycyl-tRNA(Ala) + H2O = tRNA(Ala) + glycine + H(+). It carries out the reaction a D-aminoacyl-tRNA + H2O = a tRNA + a D-alpha-amino acid + H(+). An aminoacyl-tRNA editing enzyme that deacylates mischarged D-aminoacyl-tRNAs. Also deacylates mischarged glycyl-tRNA(Ala), protecting cells against glycine mischarging by AlaRS. Acts via tRNA-based rather than protein-based catalysis; rejects L-amino acids rather than detecting D-amino acids in the active site. By recycling D-aminoacyl-tRNA to D-amino acids and free tRNA molecules, this enzyme counteracts the toxicity associated with the formation of D-aminoacyl-tRNA entities in vivo and helps enforce protein L-homochirality. The sequence is that of D-aminoacyl-tRNA deacylase from Mannheimia succiniciproducens (strain KCTC 0769BP / MBEL55E).